The following is a 129-amino-acid chain: MKYFVVALALVAAFVCIAESKPAESEHELAEVEEENELADLEDAVWLEHLADLSDLEEARGFFGNTWKKIKGKSDKIMLKKAVKIMVKKEGISKEEAQAKVDAMSKKQIRLYLLKYYGKKALQKASEKL.

Positions 1-20 (MKYFVVALALVAAFVCIAES) are cleaved as a signal peptide. The propeptide occupies 21 to 60 (KPAESEHELAEVEEENELADLEDAVWLEHLADLSDLEEAR). The Processing quadruplet motif motif lies at 57-60 (EEAR).

In terms of processing, cleavage of the propeptide depends on the processing quadruplet motif (XXXR, with at least one of X being E). In terms of tissue distribution, expressed by the venom gland.

It localises to the secreted. Functionally, insecticidal, cytolytic and antimicrobial peptide. Forms voltage-dependent, ion-permeable channels in membranes. At high concentration causes cell membrane lysis. The sequence is that of M-zodatoxin-Lt8e (cit 1-5) from Lachesana tarabaevi (Spider).